The chain runs to 234 residues: Leucyl/phenylalanyl-tRNA--protein transferase (234 aa).

Belongs to the L/F-transferase family.

It is found in the cytoplasm. It catalyses the reaction N-terminal L-lysyl-[protein] + L-leucyl-tRNA(Leu) = N-terminal L-leucyl-L-lysyl-[protein] + tRNA(Leu) + H(+). The enzyme catalyses N-terminal L-arginyl-[protein] + L-leucyl-tRNA(Leu) = N-terminal L-leucyl-L-arginyl-[protein] + tRNA(Leu) + H(+). It carries out the reaction L-phenylalanyl-tRNA(Phe) + an N-terminal L-alpha-aminoacyl-[protein] = an N-terminal L-phenylalanyl-L-alpha-aminoacyl-[protein] + tRNA(Phe). Functions in the N-end rule pathway of protein degradation where it conjugates Leu, Phe and, less efficiently, Met from aminoacyl-tRNAs to the N-termini of proteins containing an N-terminal arginine or lysine. The protein is Leucyl/phenylalanyl-tRNA--protein transferase of Escherichia coli O81 (strain ED1a).